A 240-amino-acid chain; its full sequence is Hairy and enhancer of split-related protein HELT (240 aa).

The region spanning 10 to 65 is the bHLH domain; sequence RTPVSHKVIEKRRRDRINRCLNELGKTVPMALAKQSSGKLEKAEILEMTVQYLRAL. Lys48 is subject to N6-acetyllysine. Positions 86–121 constitute an Orange domain; that stretch reads FHYGYHECMKNLVHYLTTVERMETKDTKYARILAFL.

This sequence belongs to the HEY family. In terms of assembly, self-associates. Interacts with HES5 and HEY2. Expressed in heart and testis.

Its subcellular location is the nucleus. In terms of biological role, transcriptional repressor which binds preferentially to the canonical E box sequence 5'-CACGCG-3'. Required for the development of GABAergic neurons. The sequence is that of Hairy and enhancer of split-related protein HELT (Helt) from Mus musculus (Mouse).